The chain runs to 478 residues: Trigger factor (478 aa).

Residues 154 to 167 are compositionally biased toward basic and acidic residues; sequence MAKDSRSFEPREEG. Disordered regions lie at residues 154–173 and 441–478; these read MAKDSRSFEPREEGAEAQSG and KEALFAEDDEADAVTGGAATDEKPSESNNEAAADKAAG. One can recognise a PPIase FKBP-type domain in the interval 173 to 258; the sequence is GDRVTIDFVG…VKAVAAPGET (86 aa).

The protein belongs to the FKBP-type PPIase family. Tig subfamily.

Its subcellular location is the cytoplasm. It catalyses the reaction [protein]-peptidylproline (omega=180) = [protein]-peptidylproline (omega=0). Its function is as follows. Involved in protein export. Acts as a chaperone by maintaining the newly synthesized protein in an open conformation. Functions as a peptidyl-prolyl cis-trans isomerase. The chain is Trigger factor from Methylorubrum extorquens (strain CM4 / NCIMB 13688) (Methylobacterium extorquens).